The following is a 130-amino-acid chain: uncharacterized protein (130 aa).

This is an uncharacterized protein from Orgyia pseudotsugata multicapsid polyhedrosis virus (OpMNPV).